A 346-amino-acid polypeptide reads, in one-letter code: Leucine zipper protein 2 (346 aa).

The N-terminal stretch at 1–17 is a signal peptide; sequence MKFIGAVYLLFLLPALS. N-linked (GlcNAc...) asparagine glycans are attached at residues N19 and N131. A coiled-coil region spans residues 41 to 209; it reads RHLSKTSKEL…QLKALKDTVH (169 aa). A leucine-zipper region spans residues 162–190; that stretch reads LRYGKKDLIFKGQQLMDLENKLKVAKDEL. N241 and N296 each carry an N-linked (GlcNAc...) asparagine glycan. The disordered stretch occupies residues 271 to 346; it reads SAVMRRESTG…LKKTQSDKHN (76 aa). The segment covering 293–324 has biased composition (polar residues); sequence CSHNQTESSSVMKKTFGHSQSKTPEQNGQGQA. A compositionally biased stretch (basic and acidic residues) spans 326–346; the sequence is TAEESVKTDGELKKTQSDKHN.

Its subcellular location is the secreted. The polypeptide is Leucine zipper protein 2 (luzp2) (Danio rerio (Zebrafish)).